The chain runs to 37 residues: Large ribosomal subunit protein bL36 (37 aa).

It belongs to the bacterial ribosomal protein bL36 family.

This Alkaliphilus oremlandii (strain OhILAs) (Clostridium oremlandii (strain OhILAs)) protein is Large ribosomal subunit protein bL36.